We begin with the raw amino-acid sequence, 448 residues long: Cysteine--tRNA ligase (448 aa).

C29 serves as a coordination point for Zn(2+). The short motif at P31 to N41 is the 'HIGH' region element. Residues A79–H91 are compositionally biased toward basic and acidic residues. A disordered region spans residues A79–P106. Positions 206 and 235 each coordinate Zn(2+). Positions R265–S269 match the 'KMSKS' region motif. K268 serves as a coordination point for ATP.

This sequence belongs to the class-I aminoacyl-tRNA synthetase family. As to quaternary structure, monomer. It depends on Zn(2+) as a cofactor.

The protein resides in the cytoplasm. It carries out the reaction tRNA(Cys) + L-cysteine + ATP = L-cysteinyl-tRNA(Cys) + AMP + diphosphate. The chain is Cysteine--tRNA ligase (cysS) from Azospirillum brasilense.